Consider the following 31-residue polypeptide: Cytochrome b6-f complex subunit 6 (31 aa).

The helical transmembrane segment at 4-24 (VISYLSLLFISFLFALTLFIV) threads the bilayer.

Belongs to the PetL family. In terms of assembly, the 4 large subunits of the cytochrome b6-f complex are cytochrome b6, subunit IV (17 kDa polypeptide, PetD), cytochrome f and the Rieske protein, while the 4 small subunits are PetG, PetL, PetM and PetN. The complex functions as a dimer.

It localises to the plastid. The protein resides in the chloroplast thylakoid membrane. Functionally, component of the cytochrome b6-f complex, which mediates electron transfer between photosystem II (PSII) and photosystem I (PSI), cyclic electron flow around PSI, and state transitions. PetL is important for photoautotrophic growth as well as for electron transfer efficiency and stability of the cytochrome b6-f complex. In Chara vulgaris (Common stonewort), this protein is Cytochrome b6-f complex subunit 6.